A 548-amino-acid polypeptide reads, in one-letter code: uncharacterized protein (548 aa).

The region spanning 8–200 (KLFADMIIQG…LLCVYEGFLK (193 aa)) is the DhaL domain.

This is an uncharacterized protein from Staphylococcus aureus (strain bovine RF122 / ET3-1).